A 392-amino-acid polypeptide reads, in one-letter code: Probable tRNA sulfurtransferase (392 aa).

The 108-residue stretch at 59–166 folds into the THUMP domain; the sequence is DEIIERVKKV…ECSFVFTKKV (108 aa). ATP-binding positions include 183 to 184, 208 to 209, Arg265, Gly287, and Gln296; these read LL and HF.

This sequence belongs to the ThiI family.

The protein localises to the cytoplasm. It carries out the reaction [ThiI sulfur-carrier protein]-S-sulfanyl-L-cysteine + a uridine in tRNA + 2 reduced [2Fe-2S]-[ferredoxin] + ATP + H(+) = [ThiI sulfur-carrier protein]-L-cysteine + a 4-thiouridine in tRNA + 2 oxidized [2Fe-2S]-[ferredoxin] + AMP + diphosphate. The catalysed reaction is [ThiS sulfur-carrier protein]-C-terminal Gly-Gly-AMP + S-sulfanyl-L-cysteinyl-[cysteine desulfurase] + AH2 = [ThiS sulfur-carrier protein]-C-terminal-Gly-aminoethanethioate + L-cysteinyl-[cysteine desulfurase] + A + AMP + 2 H(+). The protein operates within cofactor biosynthesis; thiamine diphosphate biosynthesis. In terms of biological role, catalyzes the ATP-dependent transfer of a sulfur to tRNA to produce 4-thiouridine in position 8 of tRNAs, which functions as a near-UV photosensor. Also catalyzes the transfer of sulfur to the sulfur carrier protein ThiS, forming ThiS-thiocarboxylate. This is a step in the synthesis of thiazole, in the thiamine biosynthesis pathway. The sulfur is donated as persulfide by IscS. The chain is Probable tRNA sulfurtransferase from Alkaliphilus metalliredigens (strain QYMF).